A 160-amino-acid chain; its full sequence is 2-C-methyl-D-erythritol 2,4-cyclodiphosphate synthase (160 aa).

A divalent metal cation-binding residues include Asp-9 and His-11. Residues 9 to 11 and 35 to 36 each bind 4-CDP-2-C-methyl-D-erythritol 2-phosphate; these read DVH and HS. His-43 contributes to the a divalent metal cation binding site. Residues 57-59, 62-66, 101-107, 133-136, Phe-140, and Arg-143 each bind 4-CDP-2-C-methyl-D-erythritol 2-phosphate; these read DIG, FPDTD, AEAPKMA, and TTSE.

Belongs to the IspF family. As to quaternary structure, homotrimer. A divalent metal cation is required as a cofactor.

It catalyses the reaction 4-CDP-2-C-methyl-D-erythritol 2-phosphate = 2-C-methyl-D-erythritol 2,4-cyclic diphosphate + CMP. The protein operates within isoprenoid biosynthesis; isopentenyl diphosphate biosynthesis via DXP pathway; isopentenyl diphosphate from 1-deoxy-D-xylulose 5-phosphate: step 4/6. Involved in the biosynthesis of isopentenyl diphosphate (IPP) and dimethylallyl diphosphate (DMAPP), two major building blocks of isoprenoid compounds. Catalyzes the conversion of 4-diphosphocytidyl-2-C-methyl-D-erythritol 2-phosphate (CDP-ME2P) to 2-C-methyl-D-erythritol 2,4-cyclodiphosphate (ME-CPP) with a corresponding release of cytidine 5-monophosphate (CMP). This chain is 2-C-methyl-D-erythritol 2,4-cyclodiphosphate synthase, found in Methylobacillus flagellatus (strain ATCC 51484 / DSM 6875 / VKM B-1610 / KT).